The primary structure comprises 430 residues: Tol-Pal system protein TolB (430 aa).

Positions 1 to 21 (MKQALRVAFGFLILWASVLHA) are cleaved as a signal peptide.

It belongs to the TolB family. In terms of assembly, the Tol-Pal system is composed of five core proteins: the inner membrane proteins TolA, TolQ and TolR, the periplasmic protein TolB and the outer membrane protein Pal. They form a network linking the inner and outer membranes and the peptidoglycan layer.

It localises to the periplasm. Part of the Tol-Pal system, which plays a role in outer membrane invagination during cell division and is important for maintaining outer membrane integrity. TolB occupies a key intermediary position in the Tol-Pal system because it communicates directly with both membrane-embedded components, Pal in the outer membrane and TolA in the inner membrane. In Shigella flexneri, this protein is Tol-Pal system protein TolB.